The sequence spans 276 residues: NH(3)-dependent NAD(+) synthetase (276 aa).

Residue 47-54 (GISGGQDS) coordinates ATP. Aspartate 53 is a Mg(2+) binding site. Arginine 141 serves as a coordination point for deamido-NAD(+). Threonine 161 provides a ligand contact to ATP. Glutamate 166 is a binding site for Mg(2+). The deamido-NAD(+) site is built by lysine 174 and aspartate 181. 2 residues coordinate ATP: lysine 190 and threonine 212. 261–262 (HK) serves as a coordination point for deamido-NAD(+).

The protein belongs to the NAD synthetase family. As to quaternary structure, homodimer.

It carries out the reaction deamido-NAD(+) + NH4(+) + ATP = AMP + diphosphate + NAD(+) + H(+). It functions in the pathway cofactor biosynthesis; NAD(+) biosynthesis; NAD(+) from deamido-NAD(+) (ammonia route): step 1/1. Catalyzes the ATP-dependent amidation of deamido-NAD to form NAD. Uses ammonia as a nitrogen source. The protein is NH(3)-dependent NAD(+) synthetase of Levilactobacillus brevis (strain ATCC 367 / BCRC 12310 / CIP 105137 / JCM 1170 / LMG 11437 / NCIMB 947 / NCTC 947) (Lactobacillus brevis).